Consider the following 106-residue polypeptide: uncharacterized protein (106 aa).

This is an uncharacterized protein from Rhodococcus erythropolis (Arthrobacter picolinophilus).